The primary structure comprises 220 residues: UPF0319 protein YccT (220 aa).

A signal peptide spans 1–20 (MKAGTLTLLIALCLPISVSA).

Belongs to the UPF0319 family.

This chain is UPF0319 protein YccT, found in Escherichia fergusonii (strain ATCC 35469 / DSM 13698 / CCUG 18766 / IAM 14443 / JCM 21226 / LMG 7866 / NBRC 102419 / NCTC 12128 / CDC 0568-73).